The sequence spans 209 residues: Uracil phosphoribosyltransferase (209 aa).

Residues Arg79, Arg104, and 131–139 (TPVVATANT) contribute to the 5-phospho-alpha-D-ribose 1-diphosphate site. Uracil-binding positions include Ile194 and 199–201 (GDA). Asp200 is a 5-phospho-alpha-D-ribose 1-diphosphate binding site.

The protein belongs to the UPRTase family. It depends on Mg(2+) as a cofactor.

The catalysed reaction is UMP + diphosphate = 5-phospho-alpha-D-ribose 1-diphosphate + uracil. The protein operates within pyrimidine metabolism; UMP biosynthesis via salvage pathway; UMP from uracil: step 1/1. With respect to regulation, allosterically activated by GTP. In terms of biological role, catalyzes the conversion of uracil and 5-phospho-alpha-D-ribose 1-diphosphate (PRPP) to UMP and diphosphate. This chain is Uracil phosphoribosyltransferase, found in Bradyrhizobium diazoefficiens (strain JCM 10833 / BCRC 13528 / IAM 13628 / NBRC 14792 / USDA 110).